Consider the following 122-residue polypeptide: Flagellar protein FliT (122 aa).

The segment at 1 to 50 (MTSTVEFINRWQRIALLSQSLLELAQRGEWELLLQQEVSYLQSIETVMEK) is required for homodimerization. Positions 60–98 (IQDMVAGYIKQTLDNEQRLKGLLQQRLDELSGLIGQSTR) are fliD binding.

It belongs to the FliT family. As to quaternary structure, homodimer. Interacts with FliD and FlhC.

The protein localises to the cytoplasm. The protein resides in the cytosol. Functionally, dual-function protein that regulates the transcription of class 2 flagellar operons and that also acts as an export chaperone for the filament-capping protein FliD. As a transcriptional regulator, acts as an anti-FlhDC factor; it directly binds FlhC, thus inhibiting the binding of the FlhC/FlhD complex to class 2 promoters, resulting in decreased expression of class 2 flagellar operons. As a chaperone, effects FliD transition to the membrane by preventing its premature polymerization, and by directing it to the export apparatus. This is Flagellar protein FliT from Salmonella arizonae (strain ATCC BAA-731 / CDC346-86 / RSK2980).